Consider the following 418-residue polypeptide: EPS I polysaccharide export inner membrane protein EpsF (418 aa).

Transmembrane regions (helical) follow at residues 21–41 (VLVV…LPII), 45–65 (CAAI…LATA), 142–162 (PLLV…IAIY), 170–190 (YVVF…GSAI), 222–242 (AGTH…VLFL), 262–282 (LIVL…EFVM), 296–316 (SAWE…AWLL), 326–346 (MAFL…PAVG), 347–367 (ARLF…FFFA), and 377–397 (KTLA…IVSA).

It to S.marcescens SfuB.

The protein localises to the cell inner membrane. In terms of biological role, probably involved in polymerization and/or export of exopolysaccharide EPS I which functions as a virulence factor. May play a role in export of EPS I or its intermediates across the membranes. The sequence is that of EPS I polysaccharide export inner membrane protein EpsF (epsF) from Ralstonia nicotianae (strain ATCC BAA-1114 / GMI1000) (Ralstonia solanacearum).